The sequence spans 598 residues: Nitrate/nitrite sensor protein NarX (598 aa).

At 1–14 the chain is on the cytoplasmic side; that stretch reads MLKRCLSPLTLVNQ. Residues 15–37 form a helical membrane-spanning segment; it reads VALIVLLSTAIGLAGMAVSGWLV. The Periplasmic portion of the chain corresponds to 38 to 151; the sequence is QGVQGSAHAI…DRTTEMRIET (114 aa). The chain crosses the membrane as a helical span at residues 152–174; that stretch reads VVLVHRVMAVFMALLLVFTIIWL. At 175 to 598 the chain is on the cytoplasmic side; the sequence is RARLLQPWRQ…FTDVQGDTHE (424 aa). The HAMP domain occupies 176-228; it reads ARLLQPWRQLLAMASAVSHRDFTQRANISGRNEMAMLGTALNNMSAELAESYA. A Histidine kinase domain is found at 393–587; sequence TIARELHDSI…EVVVTFIPEK (195 aa). Residue histidine 399 is modified to Phosphohistidine; by autocatalysis.

The protein localises to the cell inner membrane. It catalyses the reaction ATP + protein L-histidine = ADP + protein N-phospho-L-histidine.. Acts as a sensor for nitrate/nitrite and transduces signal of nitrate availability to the NarL protein and of both nitrate/nitrite to the NarP protein. NarX probably activates NarL and NarP by phosphorylation in the presence of nitrate. NarX also plays a negative role in controlling NarL activity, probably through dephosphorylation in the absence of nitrate. The protein is Nitrate/nitrite sensor protein NarX (narX) of Escherichia coli O157:H7.